A 271-amino-acid polypeptide reads, in one-letter code: Transmembrane protein 150A (271 aa).

Over M1–T2 the chain is Cytoplasmic. The helical transmembrane segment at A3 to Y23 threads the bilayer. Residues A24–E75 lie on the Extracellular side of the membrane. 2 N-linked (GlcNAc...) asparagine glycosylation sites follow: N37 and N41. A helical membrane pass occupies residues S76 to L96. At R97–S108 the chain is on the cytoplasmic side. A helical transmembrane segment spans residues W109–G129. At N130–H140 the chain is on the extracellular side. Residues Y141–L161 traverse the membrane as a helical segment. Residues F162–R178 lie on the Cytoplasmic side of the membrane. The chain crosses the membrane as a helical span at residues S179–E199. Topologically, residues S200 to E211 are extracellular. The helical transmembrane segment at W212–I232 threads the bilayer. Residues S233–I271 are Cytoplasmic-facing.

The protein belongs to the DRAM/TMEM150 family. As to quaternary structure, interacts (via C-terminal cytoplasmic tail) with PI4KA.

It localises to the cell membrane. Regulates localization of phosphatidylinositol 4-kinase (PI4K) to the plasma membrane, possibly by reducing the association of TTC7 (TTC7A or TTC7B) with the PI4K complex. Acts as a regulator of phosphatidylinositol 4-phosphate (PtdIns(4)P) synthesis. May also play a role in fasting-induced catabolism. This chain is Transmembrane protein 150A (Tmem150a), found in Mus musculus (Mouse).